The chain runs to 185 residues: Adenine phosphoribosyltransferase (185 aa).

It belongs to the purine/pyrimidine phosphoribosyltransferase family. In terms of assembly, homodimer.

The protein resides in the cytoplasm. The enzyme catalyses AMP + diphosphate = 5-phospho-alpha-D-ribose 1-diphosphate + adenine. Its pathway is purine metabolism; AMP biosynthesis via salvage pathway; AMP from adenine: step 1/1. Its function is as follows. Catalyzes a salvage reaction resulting in the formation of AMP, that is energically less costly than de novo synthesis. The chain is Adenine phosphoribosyltransferase from Pectobacterium atrosepticum (strain SCRI 1043 / ATCC BAA-672) (Erwinia carotovora subsp. atroseptica).